Reading from the N-terminus, the 172-residue chain is Stellate protein CG33243 (172 aa).

This sequence belongs to the casein kinase 2 subunit beta family. Interacts in vitro with the casein kinase 2 alpha subunit (CkII-alpha). The relevance of such interaction is however unclear in vivo. Probably not expressed in wild-type flies. In males lacking the Y chromosome, it is testis-specific and constitutes the main component of star-shaped crystals.

In terms of biological role, unknown. In males lacking the Y chromosome, its strong overexpression leads to the appearance of proteinaceous star-shaped crystals in the primary spermatocytes causing meiotic drive, possibly by interfering with normal casein kinase 2 activity. In Drosophila melanogaster (Fruit fly), this protein is Stellate protein CG33243 (Ste:CG33243).